Consider the following 55-residue polypeptide: Conotoxin Cal22d (55 aa).

Residues 1–5 (GRPSA) constitute a propeptide that is removed on maturation.

Contains 4 disulfide bonds. Expressed by the venom duct.

The protein resides in the secreted. In terms of biological role, probable neurotoxin with unknown target. Possibly targets ion channels. The sequence is that of Conotoxin Cal22d from Californiconus californicus (California cone).